We begin with the raw amino-acid sequence, 293 residues long: Mating-type protein A-1 (293 aa).

The alpha box DNA-binding region spans 42–97 (AAKKKVNGFMGFRSYYSPLFSQLPQKERSPFMTILWQHDPFHNEWDFMCSVYSSIR).

The protein belongs to the MATALPHA1 family.

The protein localises to the nucleus. Mating type proteins are sequence specific DNA-binding proteins that act as master switches in yeast differentiation by controlling gene expression in a cell type-specific fashion. Transcriptional activator that induces the transcription of A-specific genes like mating factor ccg-4. Required for mating as an A-cell and for blocking of heterokaryon formation (vegetative incompatibility). The sequence is that of Mating-type protein A-1 (mtA-1) from Neurospora crassa (strain ATCC 24698 / 74-OR23-1A / CBS 708.71 / DSM 1257 / FGSC 987).